The sequence spans 443 residues: Acid phosphatase type 7 (443 aa).

Residues 1 to 23 (MAAAPPPPPPLLLLLLCVCAVFA) form the signal peptide. 3 N-linked (GlcNAc...) asparagine glycosylation sites follow: asparagine 53, asparagine 76, and asparagine 126. The Fe cation site is built by aspartate 140, aspartate 169, and tyrosine 172. Aspartate 169 contributes to the Zn(2+) binding site. Asparagine 204 is a Zn(2+) binding site. Asparagine 210 carries N-linked (GlcNAc...) asparagine glycosylation. Zn(2+) is bound at residue histidine 288. An N-linked (GlcNAc...) asparagine glycan is attached at asparagine 313. A Zn(2+)-binding site is contributed by histidine 338. Position 340 (histidine 340) interacts with Fe cation. N-linked (GlcNAc...) asparagine glycosylation is found at asparagine 355 and asparagine 409.

The protein belongs to the metallophosphoesterase superfamily. Purple acid phosphatase family. Requires Fe cation as cofactor. It depends on Zn(2+) as a cofactor.

The protein resides in the secreted. It catalyses the reaction a phosphate monoester + H2O = an alcohol + phosphate. This chain is Acid phosphatase type 7, found in Danio rerio (Zebrafish).